The chain runs to 115 residues: MARVKSGKTNRARHKKVLKRAKGYYSAGSRAYIHAVEKNDRGMAFAYRDRKVNKRNFRTLWNQRINAAARLNGTTYSRLIGGLIKAGIQVDRKILADLAINDAAAFTALCKHALA.

The protein belongs to the bacterial ribosomal protein bL20 family.

Binds directly to 23S ribosomal RNA and is necessary for the in vitro assembly process of the 50S ribosomal subunit. It is not involved in the protein synthesizing functions of that subunit. This chain is Large ribosomal subunit protein bL20, found in Bdellovibrio bacteriovorus (strain ATCC 15356 / DSM 50701 / NCIMB 9529 / HD100).